Here is a 454-residue protein sequence, read N- to C-terminus: GTPase Der (454 aa).

2 consecutive EngA-type G domains span residues 4–168 (PQVA…PEKD) and 178–352 (MKIA…KQAQ). GTP is bound by residues 10–17 (GRPNVGKS), 57–61 (DTGGM), 120–123 (NKAD), 184–191 (GRRNVGKS), 231–235 (DTPGL), and 296–299 (NKWD). The region spanning 353–437 (SRVSTGELNR…PIKLYMQQRS (85 aa)) is the KH-like domain.

It belongs to the TRAFAC class TrmE-Era-EngA-EngB-Septin-like GTPase superfamily. EngA (Der) GTPase family. In terms of assembly, associates with the 50S ribosomal subunit.

In terms of biological role, GTPase that plays an essential role in the late steps of ribosome biogenesis. In Rhodopirellula baltica (strain DSM 10527 / NCIMB 13988 / SH1), this protein is GTPase Der.